We begin with the raw amino-acid sequence, 393 residues long: Elongation factor Tu (393 aa).

One can recognise a tr-type G domain in the interval 10–203; sequence KPHVNIGTIG…AVDAFIPDPV (194 aa). Positions 19–26 are G1; the sequence is GHVDHGKT. GTP is bound at residue 19-26; sequence GHVDHGKT. T26 contacts Mg(2+). Residues 60 to 64 are G2; that stretch reads GITIS. A G3 region spans residues 81–84; sequence DCPG. GTP-binding positions include 81 to 85 and 136 to 139; these read DCPGH and NKVD. The segment at 136-139 is G4; sequence NKVD. A G5 region spans residues 173-175; sequence SAL.

The protein belongs to the TRAFAC class translation factor GTPase superfamily. Classic translation factor GTPase family. EF-Tu/EF-1A subfamily. Monomer.

It is found in the cytoplasm. It carries out the reaction GTP + H2O = GDP + phosphate + H(+). GTP hydrolase that promotes the GTP-dependent binding of aminoacyl-tRNA to the A-site of ribosomes during protein biosynthesis. This Chlorobium chlorochromatii (strain CaD3) protein is Elongation factor Tu.